Here is a 578-residue protein sequence, read N- to C-terminus: Laccase-10 (578 aa).

The signal sequence occupies residues 1–29 (MGARCLALLLLYGTLLLLLLLPQLPLAGA). 2 consecutive Plastocyanin-like domains span residues 37–153 (NVKL…PKAG) and 163–319 (KDVP…YAPP). Residues Asn-42 and Asn-83 are each glycosylated (N-linked (GlcNAc...) asparagine). Cu cation is bound by residues His-87 and His-89. N-linked (GlcNAc...) asparagine glycosylation is present at Asn-119. His-132 and His-134 together coordinate Cu cation. Residues Asn-192, Asn-208, Asn-244, Asn-307, Asn-336, Asn-384, Asn-392, Asn-402, Asn-438, Asn-445, Asn-448, Asn-451, and Asn-461 are each glycosylated (N-linked (GlcNAc...) asparagine). One can recognise a Plastocyanin-like 3 domain in the interval 428–562 (DFPASPLEPF…KMAWVVNDGP (135 aa)). Positions 479, 482, 484, 541, 542, 543, and 547 each coordinate Cu cation.

It belongs to the multicopper oxidase family. Cu cation serves as cofactor.

The protein resides in the secreted. Its subcellular location is the extracellular space. It is found in the apoplast. It carries out the reaction 4 hydroquinone + O2 = 4 benzosemiquinone + 2 H2O. In terms of biological role, lignin degradation and detoxification of lignin-derived products. The chain is Laccase-10 (LAC10) from Oryza sativa subsp. japonica (Rice).